A 116-amino-acid chain; its full sequence is Tachykinin-3 (116 aa).

An N-terminal signal peptide occupies residues 1-20 (MRSAMLFAAVLALSLAWTFG). Residues 21–79 (AACEEPQEQGGRLSKDSDLSLLPPPLLRRLYDSRSISLEGLLKVLSKASVGPKETSLPQ) constitute a propeptide that is removed on maturation. M91 bears the Methionine amide mark. Residues 92–116 (GKRNSQPDTPADVVEENTPSFGVLK) are disordered. The propeptide occupies 95 to 116 (NSQPDTPADVVEENTPSFGVLK).

The protein belongs to the tachykinin family.

Its subcellular location is the secreted. Tachykinins are active peptides which excite neurons, evoke behavioral responses, are potent vasodilators and secretagogues, and contract (directly or indirectly) many smooth muscles. Is a critical central regulator of gonadal function. The chain is Tachykinin-3 (Tac3) from Rattus norvegicus (Rat).